A 206-amino-acid polypeptide reads, in one-letter code: NADH-quinone oxidoreductase subunit C (206 aa).

Belongs to the complex I 30 kDa subunit family. As to quaternary structure, NDH-1 is composed of 14 different subunits. Subunits NuoB, C, D, E, F, and G constitute the peripheral sector of the complex.

The protein resides in the cell inner membrane. The enzyme catalyses a quinone + NADH + 5 H(+)(in) = a quinol + NAD(+) + 4 H(+)(out). Functionally, NDH-1 shuttles electrons from NADH, via FMN and iron-sulfur (Fe-S) centers, to quinones in the respiratory chain. The immediate electron acceptor for the enzyme in this species is believed to be ubiquinone. Couples the redox reaction to proton translocation (for every two electrons transferred, four hydrogen ions are translocated across the cytoplasmic membrane), and thus conserves the redox energy in a proton gradient. In Bordetella avium (strain 197N), this protein is NADH-quinone oxidoreductase subunit C.